The following is a 361-amino-acid chain: Tegument protein UL51 homolog (361 aa).

The S-palmitoyl cysteine; by host moiety is linked to residue Cys-8. The disordered stretch occupies residues 251–299 (GDEEDEVTVMSPSPEPVQQQPPVEPVQQQPQGRGSHRRRYKESAPQETL). A compositionally biased stretch (low complexity) spans 266 to 281 (PVQQQPPVEPVQQQPQ).

It belongs to the herpesviridae UL51 family. As to quaternary structure, oligomerizes. Interacts with UL103; this interaction mediates UL103 incorporation to virions. Phosphorylated. Post-translationally, palmitoylation is necessary for Golgi localization.

It localises to the virion tegument. Its subcellular location is the host cytoplasm. It is found in the host Golgi apparatus. Functionally, plays several roles during the time course of infection, including egress of virus particles from the perinuclear space and secondary envelopment of cytoplasmic capsids that bud into specific trans-Golgi network (TGN)-derived membranes. In Homo sapiens (Human), this protein is Tegument protein UL51 homolog (UL71).